The chain runs to 423 residues: Ferrochelatase, mitochondrial (423 aa).

A mitochondrion-targeting transit peptide spans 1-40 (MIRFCPSCFALKRTAPVLNHTSRLGNYFNNTFSKFSVNRM). Position 200 (C200) interacts with [2Fe-2S] cluster. D385 is a catalytic residue. [2Fe-2S] cluster-binding residues include C405, C408, and C413.

It belongs to the ferrochelatase family. In terms of assembly, monomer. [2Fe-2S] cluster serves as cofactor.

Its subcellular location is the mitochondrion inner membrane. It localises to the cytoplasm. It is found in the nucleus. The enzyme catalyses heme b + 2 H(+) = protoporphyrin IX + Fe(2+). The protein operates within porphyrin-containing compound metabolism; protoheme biosynthesis; protoheme from protoporphyrin-IX: step 1/1. Catalyzes the ferrous insertion into protoporphyrin IX. The polypeptide is Ferrochelatase, mitochondrial (hem15) (Schizosaccharomyces pombe (strain 972 / ATCC 24843) (Fission yeast)).